Consider the following 89-residue polypeptide: Small ribosomal subunit protein uS15 (89 aa).

It belongs to the universal ribosomal protein uS15 family. As to quaternary structure, part of the 30S ribosomal subunit. Forms a bridge to the 50S subunit in the 70S ribosome, contacting the 23S rRNA.

Functionally, one of the primary rRNA binding proteins, it binds directly to 16S rRNA where it helps nucleate assembly of the platform of the 30S subunit by binding and bridging several RNA helices of the 16S rRNA. In terms of biological role, forms an intersubunit bridge (bridge B4) with the 23S rRNA of the 50S subunit in the ribosome. The chain is Small ribosomal subunit protein uS15 from Dinoroseobacter shibae (strain DSM 16493 / NCIMB 14021 / DFL 12).